An 88-amino-acid chain; its full sequence is Small ribosomal subunit protein uS15 (88 aa).

Belongs to the universal ribosomal protein uS15 family. Part of the 30S ribosomal subunit. Forms a bridge to the 50S subunit in the 70S ribosome, contacting the 23S rRNA.

In terms of biological role, one of the primary rRNA binding proteins, it binds directly to 16S rRNA where it helps nucleate assembly of the platform of the 30S subunit by binding and bridging several RNA helices of the 16S rRNA. Forms an intersubunit bridge (bridge B4) with the 23S rRNA of the 50S subunit in the ribosome. This Finegoldia magna (strain ATCC 29328 / DSM 20472 / WAL 2508) (Peptostreptococcus magnus) protein is Small ribosomal subunit protein uS15.